Here is a 221-residue protein sequence, read N- to C-terminus: Iron-sulfur cluster assembly SufBD family protein ycf24 (221 aa).

Belongs to the iron-sulfur cluster assembly SufBD family.

The protein resides in the plastid. Its subcellular location is the chloroplast. The chain is Iron-sulfur cluster assembly SufBD family protein ycf24 (ycf24) from Galdieria sulphuraria (Red alga).